A 277-amino-acid chain; its full sequence is Glutamate racemase (277 aa).

Residues 9–10 (DS) and 41–42 (YG) contribute to the substrate site. Cys73 (proton donor/acceptor) is an active-site residue. A substrate-binding site is contributed by 74–75 (NT). Cys183 (proton donor/acceptor) is an active-site residue. Substrate is bound at residue 184–185 (TH).

Belongs to the aspartate/glutamate racemases family.

It carries out the reaction L-glutamate = D-glutamate. It participates in cell wall biogenesis; peptidoglycan biosynthesis. In terms of biological role, provides the (R)-glutamate required for cell wall biosynthesis. In Shewanella denitrificans (strain OS217 / ATCC BAA-1090 / DSM 15013), this protein is Glutamate racemase.